The sequence spans 315 residues: 4-hydroxy-3-methylbut-2-enyl diphosphate reductase (315 aa).

Cys12 is a binding site for [4Fe-4S] cluster. Residues His41 and His74 each coordinate (2E)-4-hydroxy-3-methylbut-2-enyl diphosphate. His41 and His74 together coordinate dimethylallyl diphosphate. Positions 41 and 74 each coordinate isopentenyl diphosphate. A [4Fe-4S] cluster-binding site is contributed by Cys96. Residue His124 coordinates (2E)-4-hydroxy-3-methylbut-2-enyl diphosphate. Dimethylallyl diphosphate is bound at residue His124. Position 124 (His124) interacts with isopentenyl diphosphate. The active-site Proton donor is the Glu126. A (2E)-4-hydroxy-3-methylbut-2-enyl diphosphate-binding site is contributed by Thr168. Residue Cys198 participates in [4Fe-4S] cluster binding. (2E)-4-hydroxy-3-methylbut-2-enyl diphosphate-binding residues include Ser226, Ser227, Asn228, and Ser270. Residues Ser226, Ser227, Asn228, and Ser270 each coordinate dimethylallyl diphosphate. Positions 226, 227, 228, and 270 each coordinate isopentenyl diphosphate.

Belongs to the IspH family. It depends on [4Fe-4S] cluster as a cofactor.

The enzyme catalyses isopentenyl diphosphate + 2 oxidized [2Fe-2S]-[ferredoxin] + H2O = (2E)-4-hydroxy-3-methylbut-2-enyl diphosphate + 2 reduced [2Fe-2S]-[ferredoxin] + 2 H(+). It carries out the reaction dimethylallyl diphosphate + 2 oxidized [2Fe-2S]-[ferredoxin] + H2O = (2E)-4-hydroxy-3-methylbut-2-enyl diphosphate + 2 reduced [2Fe-2S]-[ferredoxin] + 2 H(+). It participates in isoprenoid biosynthesis; dimethylallyl diphosphate biosynthesis; dimethylallyl diphosphate from (2E)-4-hydroxy-3-methylbutenyl diphosphate: step 1/1. The protein operates within isoprenoid biosynthesis; isopentenyl diphosphate biosynthesis via DXP pathway; isopentenyl diphosphate from 1-deoxy-D-xylulose 5-phosphate: step 6/6. In terms of biological role, catalyzes the conversion of 1-hydroxy-2-methyl-2-(E)-butenyl 4-diphosphate (HMBPP) into a mixture of isopentenyl diphosphate (IPP) and dimethylallyl diphosphate (DMAPP). Acts in the terminal step of the DOXP/MEP pathway for isoprenoid precursor biosynthesis. The protein is 4-hydroxy-3-methylbut-2-enyl diphosphate reductase of Pseudomonas fluorescens (strain SBW25).